Here is a 1116-residue protein sequence, read N- to C-terminus: MSGDTAFYELGACTNFSFLEGAAPAEEMVVFAKKARLAGLGIADRNSVAGVVRAHAKAKMENYPFQPGARLVFADGTPDVLAYPRNRRGWGHLCRLLSAGNLRSKKGDCTLHLADLLEWQEELLLIVMPDRVRPEPESLKPLLGKLQEHAGNRLYLGLAPRYDGFDRHDFAVLATVARKAGIGLLATNDALYHDPDYRPLADVVTAIREHVPVAGAGFLLQKNAERHLKSPREMARLFSDYPEAIANTQKFFRHLAFSLDELRHQYPDENAGGETPAESLRRLVSEGAAERYPEGVPEKVQRQIEYELELINDKKYEPYFLTVHKLVKFARSEKILCQGRGSAANSSVCFCLGITDVDPQKFTLLFDRFLSKDRDEPPDIDVDFEHERREEVIQYIYRTYGKEHAGLAAAVISYRSRSAGREVAKAFGFSEDVQSALVSSIWGWGNSPFTEEQARGAGLDAADPSTRRVLAYASLLMNYPRHLSQHVGGFVITRDRLDEVVPIMNTAMPDRYMIEWDKDDLDELKILKVDVLALGMLTCLAKGFKLLEAHYGEPITLAEIYQDHQPAVYDMICRADTVGVFQIESRAQMSMLPRLQPREMYDLVIEVAIVRPGPIQGNMVHPYLKRREGQRKGEKVKYPSPELKAVLERTLGVPLFQEQAMQIAITAAGFSPSEADRLRRAMATFKRTGTIHTFERKMVEGMVANGYEREFAERCFNQIKGFGEYGFPESHAASFASLVYASAWLKTYYPDIFCAALLNAQPMGFYAPAQLVRDAREHGVKVLPVDINHSDWDALLEGEGQFRKESVDPRHADMREVIKTRKAVRLGFRLVKGLKQADMGALVACRGEGYRSVHDLWFRSGLSRSVLERLADADAFRSLGLDRRAALWAVKALDEQSAVERLPLFEGAGSLDLRAEPKVALPEMPAGEQVIHDYRTLTLSLKAHPVSFMREDFSRTGILRSRDLAATATGKWVTVAGLVLVRQRPGSANGVIFMTIEDETGIANIIVWEKTFRKYRPQVMGSRLVKIRGRLQNQSGVIHVVADHLEDITPMLGLLRREARRFGANDRADGALRPSGDAREKRKLRQLRLGLPGGAEPEGEAAAQVAEAMPKGRNFH.

This sequence belongs to the DNA polymerase type-C family. DnaE2 subfamily.

The protein resides in the cytoplasm. The catalysed reaction is DNA(n) + a 2'-deoxyribonucleoside 5'-triphosphate = DNA(n+1) + diphosphate. Functionally, DNA polymerase involved in damage-induced mutagenesis and translesion synthesis (TLS). It is not the major replicative DNA polymerase. The polypeptide is Error-prone DNA polymerase (Sinorhizobium medicae (strain WSM419) (Ensifer medicae)).